The primary structure comprises 343 residues: Polyprenyl transferase spyF (343 aa).

8 helical membrane-spanning segments follow: residues Trp38 to Leu58, Val62 to Ile82, Leu92 to Ile112, Gly138 to Leu158, Leu170 to Trp190, Ala241 to Leu261, Ser273 to Leu293, and Phe311 to Met331.

The protein belongs to the UbiA prenyltransferase family. Requires Mg(2+) as cofactor.

The protein resides in the membrane. It catalyses the reaction triacetate lactone + (2E,6E,10E)-geranylgeranyl diphosphate = (2E,6E,10E)-geranylgeranyl-triacetate lactone + diphosphate. The protein operates within secondary metabolite biosynthesis; terpenoid biosynthesis. In terms of biological role, polyprenyl transferase; part of the gene cluster that mediates the biosynthesis of meroterpenoids called sartorypyrones. Within the pathway, spyF catalyzes the prenylation of triacetic acid lactone (TAL) to produce geranylgeranyl-triacetate lactone. The biosynthesis of sartorypyrones begins with the production of triacetic acid lactone (TAL) by the NR-PKS spyA using one molecule of acetyl-CoA and two molecules of malonyl-CoA. The prenyltransferase spyF then conjugates geranylgeranyl pyrophosphate (GGPP) to TAL to form geranylgeranyl-triacetate lactone, for which the pathway-specific geranylgeranyl pyrophosphate synthase (GGPS) spyE is required to provide GGPP. Subsequently, geranylgeranyl-triacetate lactone is epoxidized at the terminal olein by the FAD-dependent monooxygenase spyC, followed by cyclization of the terpenoid component catalyzed by the terpene cyclase spyD to produce both the bicyclic sartorypyrone F and the monocyclic sartorypyrone D. Finally, the last step of the biosynthesis involves the acetylation of the meroterpenoids sartorypyrones D and F by the acetyltransferase SpyB to produce sartorypyrones A and G, respectively. The chain is Polyprenyl transferase spyF from Aspergillus fumigatus (strain ATCC MYA-4609 / CBS 101355 / FGSC A1100 / Af293) (Neosartorya fumigata).